The chain runs to 485 residues: NADH-quinone oxidoreductase subunit N (485 aa).

14 helical membrane passes run 8–28, 35–55, 75–95, 105–125, 127–147, 159–179, 203–223, 235–255, 271–291, 297–317, 326–346, 373–393, 408–427, and 449–469; these read LIAL…MLSI, FVNA…LYFV, FYTG…YPWL, FYLL…ASHL, SLFI…GYAF, YTIL…LVYA, LLAG…LVPF, PAPV…GVLM, TVLG…AISQ, LLGY…IAVQ, VGVY…VVSL, AAVM…LGFI, WWLT…YYLR, and AFTA…VLGI.

It belongs to the complex I subunit 2 family. In terms of assembly, NDH-1 is composed of 13 different subunits. Subunits NuoA, H, J, K, L, M, N constitute the membrane sector of the complex.

It localises to the cell inner membrane. The catalysed reaction is a quinone + NADH + 5 H(+)(in) = a quinol + NAD(+) + 4 H(+)(out). Its function is as follows. NDH-1 shuttles electrons from NADH, via FMN and iron-sulfur (Fe-S) centers, to quinones in the respiratory chain. The immediate electron acceptor for the enzyme in this species is believed to be ubiquinone. Couples the redox reaction to proton translocation (for every two electrons transferred, four hydrogen ions are translocated across the cytoplasmic membrane), and thus conserves the redox energy in a proton gradient. The sequence is that of NADH-quinone oxidoreductase subunit N from Erwinia tasmaniensis (strain DSM 17950 / CFBP 7177 / CIP 109463 / NCPPB 4357 / Et1/99).